We begin with the raw amino-acid sequence, 332 residues long: uncharacterized protein (332 aa).

This is an uncharacterized protein from Schizosaccharomyces pombe (strain 972 / ATCC 24843) (Fission yeast).